A 1465-amino-acid chain; its full sequence is Neuropathy target esterase sws (1465 aa).

Over 1–34 the chain is Lumenal; the sequence is MDVLEMLRASASGSYNTIFSEAWCQYVSKQITAT. The chain crosses the membrane as a helical span at residues 35 to 55; the sequence is MYMYCALGMMGVLFLAWFMYF. Residues 56–1465 are Cytoplasmic-facing; it reads KRMARLRLRD…RSSANNETKN (1410 aa). Residue 174–301 coordinates a nucleoside 3',5'-cyclic phosphate; the sequence is IFGHFEKPVF…IRVIQVIMIR (128 aa). 2 stretches are compositionally biased toward polar residues: residues 331–349 and 434–454; these read STMS…RQTP and QQSV…TPDG. 2 disordered regions span residues 331–421 and 434–460; these read STMS…TEVH and QQSV…SCPP. 2 positions are modified to phosphoserine: Ser-446 and Ser-455. A nucleoside 3',5'-cyclic phosphate-binding positions include 484 to 611 and 600 to 727; these read ELGL…VVRR and IVLD…LSHR. Positions 954–1120 constitute a PNPLA domain; it reads LVLGGGGARG…VNNLPGHLWR (167 aa). Positions 958–963 match the GXGXXG motif; that stretch reads GGGARG. A GXSXG motif is present at residues 985-989; the sequence is GVSIG. Ser-987 (nucleophile) is an active-site residue. Catalysis depends on Asp-1107, which acts as the Proton acceptor. The DGA/G motif lies at 1107–1109; it reads DGG. At Ser-1201 the chain carries Phosphoserine. Residues 1371 to 1465 form a disordered region; that stretch reads LERKTDKSTQ…RSSANNETKN (95 aa). The segment covering 1378–1390 has biased composition (low complexity); it reads STQSSPPTSSRTS. A compositionally biased stretch (basic and acidic residues) spans 1392–1402; the sequence is RGKEEARHMDN. The span at 1413 to 1424 shows a compositional bias: polar residues; sequence TGSGATEGIHTS. Residues 1447–1456 are compositionally biased toward basic and acidic residues; it reads VYKDEDKENR.

It belongs to the NTE family. As to quaternary structure, interacts with Pka-C3; interaction inhibits the catalytic function of Pka-C3 and the esterase activity of sws.

The protein localises to the endoplasmic reticulum membrane. It catalyses the reaction a 1-acyl-sn-glycero-3-phosphocholine + H2O = sn-glycerol 3-phosphocholine + a fatty acid + H(+). Functionally, phospholipase B that deacylates intracellular phosphatidylcholine (PtdCho), generating glycerophosphocholine (GroPtdCho). This deacylation occurs at both sn-2 and sn-1 positions of PtdCho. Its specific chemical modification by certain organophosphorus (OP) compounds leads to distal axonopathy. Plays a role in the signaling mechanism between neurons and glia that regulates glia wrapping during development of the adult brain. Essential for membrane lipid homeostasis and cell survival in both neurons and glia of the adult brain. In Drosophila erecta (Fruit fly), this protein is Neuropathy target esterase sws.